We begin with the raw amino-acid sequence, 343 residues long: Holliday junction branch migration complex subunit RuvB (343 aa).

Positions 1-185 (MEQEDFNIRE…FGINLHLEYY (185 aa)) are large ATPase domain (RuvB-L). Residues L24, R25, G66, K69, T70, T71, 132 to 134 (EDY), R175, Y185, and R222 each bind ATP. T70 provides a ligand contact to Mg(2+). The segment at 186–256 (DDDILSNIIR…IAQFALEALN (71 aa)) is small ATPAse domain (RuvB-S). Residues 259–343 (KYGLDEIDNK…YSSQKTLFND (85 aa)) are head domain (RuvB-H). The DNA site is built by R314 and R319.

This sequence belongs to the RuvB family. As to quaternary structure, homohexamer. Forms an RuvA(8)-RuvB(12)-Holliday junction (HJ) complex. HJ DNA is sandwiched between 2 RuvA tetramers; dsDNA enters through RuvA and exits via RuvB. An RuvB hexamer assembles on each DNA strand where it exits the tetramer. Each RuvB hexamer is contacted by two RuvA subunits (via domain III) on 2 adjacent RuvB subunits; this complex drives branch migration. In the full resolvosome a probable DNA-RuvA(4)-RuvB(12)-RuvC(2) complex forms which resolves the HJ.

The protein resides in the cytoplasm. The enzyme catalyses ATP + H2O = ADP + phosphate + H(+). Its function is as follows. The RuvA-RuvB-RuvC complex processes Holliday junction (HJ) DNA during genetic recombination and DNA repair, while the RuvA-RuvB complex plays an important role in the rescue of blocked DNA replication forks via replication fork reversal (RFR). RuvA specifically binds to HJ cruciform DNA, conferring on it an open structure. The RuvB hexamer acts as an ATP-dependent pump, pulling dsDNA into and through the RuvAB complex. RuvB forms 2 homohexamers on either side of HJ DNA bound by 1 or 2 RuvA tetramers; 4 subunits per hexamer contact DNA at a time. Coordinated motions by a converter formed by DNA-disengaged RuvB subunits stimulates ATP hydrolysis and nucleotide exchange. Immobilization of the converter enables RuvB to convert the ATP-contained energy into a lever motion, pulling 2 nucleotides of DNA out of the RuvA tetramer per ATP hydrolyzed, thus driving DNA branch migration. The RuvB motors rotate together with the DNA substrate, which together with the progressing nucleotide cycle form the mechanistic basis for DNA recombination by continuous HJ branch migration. Branch migration allows RuvC to scan DNA until it finds its consensus sequence, where it cleaves and resolves cruciform DNA. The polypeptide is Holliday junction branch migration complex subunit RuvB (Bacteroides thetaiotaomicron (strain ATCC 29148 / DSM 2079 / JCM 5827 / CCUG 10774 / NCTC 10582 / VPI-5482 / E50)).